Reading from the N-terminus, the 317-residue chain is 4-hydroxy-3-methylbut-2-enyl diphosphate reductase (317 aa).

Cys12 serves as a coordination point for [4Fe-4S] cluster. Residues His41 and His74 each contribute to the (2E)-4-hydroxy-3-methylbut-2-enyl diphosphate site. His41 and His74 together coordinate dimethylallyl diphosphate. Isopentenyl diphosphate is bound by residues His41 and His74. Cys97 is a binding site for [4Fe-4S] cluster. His125 contacts (2E)-4-hydroxy-3-methylbut-2-enyl diphosphate. A dimethylallyl diphosphate-binding site is contributed by His125. His125 lines the isopentenyl diphosphate pocket. Glu127 serves as the catalytic Proton donor. A (2E)-4-hydroxy-3-methylbut-2-enyl diphosphate-binding site is contributed by Thr168. Residue Cys198 participates in [4Fe-4S] cluster binding. 4 residues coordinate (2E)-4-hydroxy-3-methylbut-2-enyl diphosphate: Ser226, Ser227, Asn228, and Ser270. Residues Ser226, Ser227, Asn228, and Ser270 each contribute to the dimethylallyl diphosphate site. Positions 226, 227, 228, and 270 each coordinate isopentenyl diphosphate.

The protein belongs to the IspH family. As to quaternary structure, homodimer. The cofactor is [4Fe-4S] cluster.

The enzyme catalyses isopentenyl diphosphate + 2 oxidized [2Fe-2S]-[ferredoxin] + H2O = (2E)-4-hydroxy-3-methylbut-2-enyl diphosphate + 2 reduced [2Fe-2S]-[ferredoxin] + 2 H(+). It carries out the reaction dimethylallyl diphosphate + 2 oxidized [2Fe-2S]-[ferredoxin] + H2O = (2E)-4-hydroxy-3-methylbut-2-enyl diphosphate + 2 reduced [2Fe-2S]-[ferredoxin] + 2 H(+). It functions in the pathway isoprenoid biosynthesis; dimethylallyl diphosphate biosynthesis; dimethylallyl diphosphate from (2E)-4-hydroxy-3-methylbutenyl diphosphate: step 1/1. It participates in isoprenoid biosynthesis; isopentenyl diphosphate biosynthesis via DXP pathway; isopentenyl diphosphate from 1-deoxy-D-xylulose 5-phosphate: step 6/6. Its function is as follows. Catalyzes the conversion of 1-hydroxy-2-methyl-2-(E)-butenyl 4-diphosphate (HMBPP) into a mixture of isopentenyl diphosphate (IPP) and dimethylallyl diphosphate (DMAPP). Acts in the terminal step of the DOXP/MEP pathway for isoprenoid precursor biosynthesis. The chain is 4-hydroxy-3-methylbut-2-enyl diphosphate reductase from Yersinia pseudotuberculosis serotype O:1b (strain IP 31758).